A 570-amino-acid polypeptide reads, in one-letter code: Urease subunit alpha (570 aa).

One can recognise a Urease domain in the interval 135 to 570 (GGLDIHIHFN…ELPLAKRYSL (436 aa)). Positions 140, 142, and 219 each coordinate Ni(2+). Lys219 is modified (N6-carboxylysine). His221 provides a ligand contact to substrate. The Ni(2+) site is built by His248 and His274. Catalysis depends on His322, which acts as the Proton donor. Residue Asp362 coordinates Ni(2+).

This sequence belongs to the metallo-dependent hydrolases superfamily. Urease alpha subunit family. As to quaternary structure, heterotrimer of UreA (gamma), UreB (beta) and UreC (alpha) subunits. Three heterotrimers associate to form the active enzyme. It depends on Ni cation as a cofactor. Post-translationally, carboxylation allows a single lysine to coordinate two nickel ions.

Its subcellular location is the cytoplasm. It catalyses the reaction urea + 2 H2O + H(+) = hydrogencarbonate + 2 NH4(+). It functions in the pathway nitrogen metabolism; urea degradation; CO(2) and NH(3) from urea (urease route): step 1/1. In Haloquadratum walsbyi (strain DSM 16790 / HBSQ001), this protein is Urease subunit alpha.